A 399-amino-acid polypeptide reads, in one-letter code: Nuclear hormone receptor family member nhr-125 (399 aa).

The segment at residues 10-80 (PFSCRICNQK…MGMDTTKFQY (71 aa)) is a DNA-binding region (nuclear receptor). NR C4-type zinc fingers lie at residues 13-33 (CRIC…CRAC) and 50-63 (CQKG…CKRC). The NR LBD domain maps to 149-392 (QLENLTEGFK…EKLQKSQFSI (244 aa)).

This sequence belongs to the nuclear hormone receptor family.

The protein resides in the nucleus. Its function is as follows. Orphan nuclear receptor. The sequence is that of Nuclear hormone receptor family member nhr-125 (nhr-125) from Caenorhabditis elegans.